The chain runs to 70 residues: DNA gyrase inhibitor YacG (70 aa).

4 residues coordinate Zn(2+): cysteine 21, cysteine 24, cysteine 36, and cysteine 40.

Belongs to the DNA gyrase inhibitor YacG family. Interacts with GyrB. It depends on Zn(2+) as a cofactor.

Its function is as follows. Inhibits all the catalytic activities of DNA gyrase by preventing its interaction with DNA. Acts by binding directly to the C-terminal domain of GyrB, which probably disrupts DNA binding by the gyrase. This Rhizobium meliloti (strain 1021) (Ensifer meliloti) protein is DNA gyrase inhibitor YacG.